Consider the following 194-residue polypeptide: Potassium-transporting ATPase KdpC subunit (194 aa).

A helical transmembrane segment spans residues 12–34 (LFLLLLTGGVYPLLTTALGQWWF).

Belongs to the KdpC family. In terms of assembly, the system is composed of three essential subunits: KdpA, KdpB and KdpC.

It localises to the cell inner membrane. Its function is as follows. Part of the high-affinity ATP-driven potassium transport (or Kdp) system, which catalyzes the hydrolysis of ATP coupled with the electrogenic transport of potassium into the cytoplasm. This subunit acts as a catalytic chaperone that increases the ATP-binding affinity of the ATP-hydrolyzing subunit KdpB by the formation of a transient KdpB/KdpC/ATP ternary complex. This Salmonella choleraesuis (strain SC-B67) protein is Potassium-transporting ATPase KdpC subunit.